Consider the following 365-residue polypeptide: Cobalt-precorrin-5B C(1)-methyltransferase (365 aa).

Belongs to the CbiD family.

The catalysed reaction is Co-precorrin-5B + S-adenosyl-L-methionine = Co-precorrin-6A + S-adenosyl-L-homocysteine. Its pathway is cofactor biosynthesis; adenosylcobalamin biosynthesis; cob(II)yrinate a,c-diamide from sirohydrochlorin (anaerobic route): step 6/10. Functionally, catalyzes the methylation of C-1 in cobalt-precorrin-5B to form cobalt-precorrin-6A. This is Cobalt-precorrin-5B C(1)-methyltransferase from Geobacillus sp. (strain WCH70).